The sequence spans 284 residues: Polyamine aminopropyltransferase (284 aa).

Residues 2–237 enclose the PABS domain; the sequence is ELWYTEEQTQ…GYWLFGFASK (236 aa). Gln31 contacts S-methyl-5'-thioadenosine. His62 and Asp86 together coordinate spermidine. S-methyl-5'-thioadenosine is bound by residues Glu106 and 137–138; that span reads DG. Asp155 (proton acceptor) is an active-site residue. 155–158 lines the spermidine pocket; the sequence is DSTD. Pro162 contacts S-methyl-5'-thioadenosine.

This sequence belongs to the spermidine/spermine synthase family. Homodimer or homotetramer.

The protein resides in the cytoplasm. It catalyses the reaction S-adenosyl 3-(methylsulfanyl)propylamine + putrescine = S-methyl-5'-thioadenosine + spermidine + H(+). It functions in the pathway amine and polyamine biosynthesis; spermidine biosynthesis; spermidine from putrescine: step 1/1. In terms of biological role, catalyzes the irreversible transfer of a propylamine group from the amino donor S-adenosylmethioninamine (decarboxy-AdoMet) to putrescine (1,4-diaminobutane) to yield spermidine. The chain is Polyamine aminopropyltransferase from Alkaliphilus metalliredigens (strain QYMF).